The primary structure comprises 108 residues: UPF0060 membrane protein YnfA (108 aa).

Over 1 to 5 the chain is Periplasmic; that stretch reads MIKTT. The chain crosses the membrane as a helical span at residues 6–26; the sequence is LLFFATALCEIIGCFLPWLWL. Residues 27-30 are Cytoplasmic-facing; it reads KRNA. Residues 31 to 51 form a helical membrane-spanning segment; sequence SIWLLLPAGISLALFVWLLTL. Residues 52-60 are Periplasmic-facing; sequence HPAASGRVY. A helical transmembrane segment spans residues 61 to 81; the sequence is AAYGGVYVCTALMWLRVVDGV. Over 82–84 the chain is Cytoplasmic; sequence KLT. A helical membrane pass occupies residues 85–105; it reads LYDWTGPLIALCGMLIIVVGW. At 106–108 the chain is on the periplasmic side; it reads GRT.

This sequence belongs to the UPF0060 family.

It localises to the cell inner membrane. In Escherichia coli O157:H7, this protein is UPF0060 membrane protein YnfA.